The primary structure comprises 127 residues: C-C motif chemokine 28 (127 aa).

The signal sequence occupies residues 1–19; that stretch reads MQQRGLAIVALAVCAALHA. Cystine bridges form between Cys30–Cys58 and Cys31–Cys73. N-linked (GlcNAc...) asparagine glycosylation is present at Asn78. A compositionally biased stretch (basic residues) spans 92–115; sequence KNGKGNVCHRKKHHGKRNSNRAHQ. Residues 92 to 127 are disordered; sequence KNGKGNVCHRKKHHGKRNSNRAHQGKHETYGHKTPY. The span at 116 to 127 shows a compositional bias: basic and acidic residues; it reads GKHETYGHKTPY.

It belongs to the intercrine beta (chemokine CC) family. As to expression, preferentially expressed by epithelial cells of diverse tissues including normal and pathological colon, salivary gland, mammary gland, trachea and rectum. Also found in prostate, spleen, thyroid, psoriasis skin and in lower levels in peripheral blood leukocytes, small intestine, Peyer patches, stomach and normal skin.

It is found in the secreted. In terms of biological role, chemotactic activity for resting CD4, CD8 T-cells and eosinophils. Binds to CCR3 and CCR10 and induces calcium mobilization in a dose-dependent manner. The chain is C-C motif chemokine 28 (CCL28) from Homo sapiens (Human).